Reading from the N-terminus, the 234-residue chain is NAD-dependent protein deacylase (234 aa).

In terms of domain architecture, Deacetylase sirtuin-type spans 1 to 234; the sequence is MTKQVRIVVL…LVPHYLAQFL (234 aa). An NAD(+)-binding site is contributed by 12-31; sequence GAGISAESGIRTFRATDGLW. Substrate-binding residues include Tyr-56 and Arg-59. 93-96 provides a ligand contact to NAD(+); it reads QNVD. The active-site Proton acceptor is the His-111. 2 residues coordinate Zn(2+): Cys-119 and Cys-138. NAD(+) contacts are provided by residues 178–180, 204–206, and Ala-222; these read GTS and NLE.

It belongs to the sirtuin family. Class III subfamily. Zn(2+) serves as cofactor.

The protein localises to the cytoplasm. It catalyses the reaction N(6)-acetyl-L-lysyl-[protein] + NAD(+) + H2O = 2''-O-acetyl-ADP-D-ribose + nicotinamide + L-lysyl-[protein]. It carries out the reaction N(6)-succinyl-L-lysyl-[protein] + NAD(+) + H2O = 2''-O-succinyl-ADP-D-ribose + nicotinamide + L-lysyl-[protein]. Functionally, NAD-dependent lysine deacetylase and desuccinylase that specifically removes acetyl and succinyl groups on target proteins. Modulates the activities of several proteins which are inactive in their acylated form. This is NAD-dependent protein deacylase from Pasteurella multocida (strain Pm70).